The chain runs to 141 residues: Hemoglobin subunit alpha (141 aa).

The Globin domain occupies 1-141 (VLSPADKTNV…VSTVLTSKYR (141 aa)). Phosphoserine is present on S3. K7 is modified (N6-succinyllysine). Position 8 is a phosphothreonine (T8). Position 11 is an N6-succinyllysine (K11). Residue K16 is modified to N6-acetyllysine; alternate. At K16 the chain carries N6-succinyllysine; alternate. Y24 bears the Phosphotyrosine mark. Position 35 is a phosphoserine (S35). K40 is modified (N6-succinyllysine). Residue S49 is modified to Phosphoserine. Position 58 (H58) interacts with O2. Residue H87 coordinates heme b. A Phosphoserine modification is found at S102. Position 108 is a phosphothreonine (T108). Phosphoserine occurs at positions 124 and 131. T134 and T137 each carry phosphothreonine. At S138 the chain carries Phosphoserine.

The protein belongs to the globin family. As to quaternary structure, heterotetramer of two alpha chains and two beta chains. As to expression, red blood cells.

Involved in oxygen transport from the lung to the various peripheral tissues. Functionally, hemopressin acts as an antagonist peptide of the cannabinoid receptor CNR1. Hemopressin-binding efficiently blocks cannabinoid receptor CNR1 and subsequent signaling. The protein is Hemoglobin subunit alpha (HBA) of Taphozous georgianus (Sharp-nosed tomb bat).